We begin with the raw amino-acid sequence, 943 residues long: Isoleucine--tRNA ligase (943 aa).

A 'HIGH' region motif is present at residues 58–68; sequence PYANGTIHIGH. Glu-567 provides a ligand contact to L-isoleucyl-5'-AMP. Residues 608-612 carry the 'KMSKS' region motif; it reads KMSKS. Lys-611 is an ATP binding site. Zn(2+) contacts are provided by Cys-906, Cys-909, Cys-926, and Cys-929.

This sequence belongs to the class-I aminoacyl-tRNA synthetase family. IleS type 1 subfamily. As to quaternary structure, monomer. The cofactor is Zn(2+).

It localises to the cytoplasm. It catalyses the reaction tRNA(Ile) + L-isoleucine + ATP = L-isoleucyl-tRNA(Ile) + AMP + diphosphate. In terms of biological role, catalyzes the attachment of isoleucine to tRNA(Ile). As IleRS can inadvertently accommodate and process structurally similar amino acids such as valine, to avoid such errors it has two additional distinct tRNA(Ile)-dependent editing activities. One activity is designated as 'pretransfer' editing and involves the hydrolysis of activated Val-AMP. The other activity is designated 'posttransfer' editing and involves deacylation of mischarged Val-tRNA(Ile). The chain is Isoleucine--tRNA ligase from Pseudomonas fluorescens (strain Pf0-1).